The sequence spans 218 residues: GTP cyclohydrolase 1 (218 aa).

Zn(2+) is bound by residues Cys107, His110, and Cys178.

The protein belongs to the GTP cyclohydrolase I family. In terms of assembly, homomer.

The catalysed reaction is GTP + H2O = 7,8-dihydroneopterin 3'-triphosphate + formate + H(+). It participates in cofactor biosynthesis; 7,8-dihydroneopterin triphosphate biosynthesis; 7,8-dihydroneopterin triphosphate from GTP: step 1/1. This is GTP cyclohydrolase 1 from Azorhizobium caulinodans (strain ATCC 43989 / DSM 5975 / JCM 20966 / LMG 6465 / NBRC 14845 / NCIMB 13405 / ORS 571).